A 206-amino-acid chain; its full sequence is dTTP/UTP pyrophosphatase (206 aa).

The active-site Proton acceptor is Asp-87.

The protein belongs to the Maf family. YhdE subfamily. A divalent metal cation is required as a cofactor.

It is found in the cytoplasm. It catalyses the reaction dTTP + H2O = dTMP + diphosphate + H(+). The enzyme catalyses UTP + H2O = UMP + diphosphate + H(+). Its function is as follows. Nucleoside triphosphate pyrophosphatase that hydrolyzes dTTP and UTP. May have a dual role in cell division arrest and in preventing the incorporation of modified nucleotides into cellular nucleic acids. This Aromatoleum aromaticum (strain DSM 19018 / LMG 30748 / EbN1) (Azoarcus sp. (strain EbN1)) protein is dTTP/UTP pyrophosphatase.